Consider the following 159-residue polypeptide: SsrA-binding protein (159 aa).

Residues 134–159 are disordered; sequence KEHDKRDTERDRDWSRDKERLMKHNA.

It belongs to the SmpB family.

The protein localises to the cytoplasm. Functionally, required for rescue of stalled ribosomes mediated by trans-translation. Binds to transfer-messenger RNA (tmRNA), required for stable association of tmRNA with ribosomes. tmRNA and SmpB together mimic tRNA shape, replacing the anticodon stem-loop with SmpB. tmRNA is encoded by the ssrA gene; the 2 termini fold to resemble tRNA(Ala) and it encodes a 'tag peptide', a short internal open reading frame. During trans-translation Ala-aminoacylated tmRNA acts like a tRNA, entering the A-site of stalled ribosomes, displacing the stalled mRNA. The ribosome then switches to translate the ORF on the tmRNA; the nascent peptide is terminated with the 'tag peptide' encoded by the tmRNA and targeted for degradation. The ribosome is freed to recommence translation, which seems to be the essential function of trans-translation. The chain is SsrA-binding protein from Marinomonas sp. (strain MWYL1).